Consider the following 185-residue polypeptide: Elongation factor P (185 aa).

It belongs to the elongation factor P family.

It localises to the cytoplasm. Its pathway is protein biosynthesis; polypeptide chain elongation. Functionally, involved in peptide bond synthesis. Stimulates efficient translation and peptide-bond synthesis on native or reconstituted 70S ribosomes in vitro. Probably functions indirectly by altering the affinity of the ribosome for aminoacyl-tRNA, thus increasing their reactivity as acceptors for peptidyl transferase. In Bordetella bronchiseptica (strain ATCC BAA-588 / NCTC 13252 / RB50) (Alcaligenes bronchisepticus), this protein is Elongation factor P.